The chain runs to 301 residues: Ornithine carbamoyltransferase (301 aa).

Carbamoyl phosphate is bound by residues 47 to 50 (STRT), Gln74, Arg98, and 125 to 128 (HPMQ). L-ornithine-binding positions include Asn156, Asp220, and 224–225 (SM). Carbamoyl phosphate-binding positions include 260-261 (CL) and Arg288.

It belongs to the aspartate/ornithine carbamoyltransferase superfamily. OTCase family.

It is found in the cytoplasm. The enzyme catalyses carbamoyl phosphate + L-ornithine = L-citrulline + phosphate + H(+). The protein operates within amino-acid biosynthesis; L-arginine biosynthesis; L-arginine from L-ornithine and carbamoyl phosphate: step 1/3. Reversibly catalyzes the transfer of the carbamoyl group from carbamoyl phosphate (CP) to the N(epsilon) atom of ornithine (ORN) to produce L-citrulline. The chain is Ornithine carbamoyltransferase from Picrophilus torridus (strain ATCC 700027 / DSM 9790 / JCM 10055 / NBRC 100828 / KAW 2/3).